Reading from the N-terminus, the 1576-residue chain is Pentafunctional AROM polypeptide (1576 aa).

Residues 1 to 387 (MGSTTFENPT…YEPKASVVED (387 aa)) form a 3-dehydroquinate synthase region. Residues 49–51 (DTN), 86–89 (ENSK), 117–119 (GGV), and Asp-122 each bind NAD(+). Residue Arg-133 coordinates 7-phospho-2-dehydro-3-deoxy-D-arabino-heptonate. 142-143 (TT) lines the NAD(+) pocket. 2 residues coordinate 7-phospho-2-dehydro-3-deoxy-D-arabino-heptonate: Asp-149 and Lys-155. Lys-164 is an NAD(+) binding site. Asn-165 contacts 7-phospho-2-dehydro-3-deoxy-D-arabino-heptonate. Residues 182 to 185 (FLET) and Asn-193 contribute to the NAD(+) site. A Zn(2+)-binding site is contributed by Glu-197. 7-phospho-2-dehydro-3-deoxy-D-arabino-heptonate contacts are provided by residues 197–200 (EVVK) and Lys-253. The Proton acceptor; for 3-dehydroquinate synthase activity role is filled by Glu-263. 7-phospho-2-dehydro-3-deoxy-D-arabino-heptonate-binding positions include 267–271 (RNILN) and His-274. Residue His-274 participates in Zn(2+) binding. The active-site Proton acceptor; for 3-dehydroquinate synthase activity is the His-278. 7-phospho-2-dehydro-3-deoxy-D-arabino-heptonate-binding residues include His-290 and Lys-359. Zn(2+) is bound at residue His-290. The EPSP synthase stretch occupies residues 400–841 (VRPSVPETLN…WDILSKSFQV (442 aa)). Cys-823 serves as the catalytic For EPSP synthase activity. The shikimate kinase stretch occupies residues 863–1055 (DKSIFIIGMR…RNKPQSFFVS (193 aa)). Residue 870–877 (GMRGAGKT) coordinates ATP. The 3-dehydroquinase stretch occupies residues 1056-1276 (LTMPDISGAA…AAPGQLSAAE (221 aa)). The active-site Proton acceptor; for 3-dehydroquinate dehydratase activity is His-1179. The Schiff-base intermediate with substrate; for 3-dehydroquinate dehydratase activity role is filled by Lys-1207. The tract at residues 1289-1576 (PKSFYLFGTP…RAAVMGDSTA (288 aa)) is shikimate dehydrogenase.

This sequence in the N-terminal section; belongs to the sugar phosphate cyclases superfamily. Dehydroquinate synthase family. The protein in the 2nd section; belongs to the EPSP synthase family. In the 3rd section; belongs to the shikimate kinase family. It in the 4th section; belongs to the type-I 3-dehydroquinase family. This sequence in the C-terminal section; belongs to the shikimate dehydrogenase family. In terms of assembly, homodimer. The cofactor is Zn(2+).

It localises to the cytoplasm. The enzyme catalyses 7-phospho-2-dehydro-3-deoxy-D-arabino-heptonate = 3-dehydroquinate + phosphate. It carries out the reaction 3-dehydroquinate = 3-dehydroshikimate + H2O. It catalyses the reaction shikimate + NADP(+) = 3-dehydroshikimate + NADPH + H(+). The catalysed reaction is shikimate + ATP = 3-phosphoshikimate + ADP + H(+). The enzyme catalyses 3-phosphoshikimate + phosphoenolpyruvate = 5-O-(1-carboxyvinyl)-3-phosphoshikimate + phosphate. It participates in metabolic intermediate biosynthesis; chorismate biosynthesis; chorismate from D-erythrose 4-phosphate and phosphoenolpyruvate: step 2/7. Its pathway is metabolic intermediate biosynthesis; chorismate biosynthesis; chorismate from D-erythrose 4-phosphate and phosphoenolpyruvate: step 3/7. The protein operates within metabolic intermediate biosynthesis; chorismate biosynthesis; chorismate from D-erythrose 4-phosphate and phosphoenolpyruvate: step 4/7. It functions in the pathway metabolic intermediate biosynthesis; chorismate biosynthesis; chorismate from D-erythrose 4-phosphate and phosphoenolpyruvate: step 5/7. It participates in metabolic intermediate biosynthesis; chorismate biosynthesis; chorismate from D-erythrose 4-phosphate and phosphoenolpyruvate: step 6/7. In terms of biological role, the AROM polypeptide catalyzes 5 consecutive enzymatic reactions in prechorismate polyaromatic amino acid biosynthesis. This is Pentafunctional AROM polypeptide from Sclerotinia sclerotiorum (strain ATCC 18683 / 1980 / Ss-1) (White mold).